Here is a 207-residue protein sequence, read N- to C-terminus: Fibronectin type III domain-containing protein 5b (207 aa).

Positions 1–26 (MWGIKGSFAVLLLLFLAYIFASSVNA) are cleaved as a signal peptide. Over 27-146 (DSLSAPLNVT…EEVGQAAQLR (120 aa)) the chain is Extracellular. Residues 31–122 (APLNVTIKAL…EPVLFRTPKE (92 aa)) form the Fibronectin type-III domain. N-linked (GlcNAc...) asparagine glycosylation is found at Asn-34 and Asn-79. The chain crosses the membrane as a helical span at residues 147 to 167 (AGELIIIVVVLVMWAGVIALF). Over 168–207 (CRQYDIIKDNEPNNNKDKAKNSSECSTPEHPTGGLLRSKV) the chain is Cytoplasmic. Basic and acidic residues predominate over residues 178–188 (EPNNNKDKAKN). Residues 178-207 (EPNNNKDKAKNSSECSTPEHPTGGLLRSKV) form a disordered region. A Microbody targeting signal motif is present at residues 205-207 (SKV).

Dimer; may exist in other oligomeric forms. The extracellular domain is cleaved and released from the cell membrane.

Its subcellular location is the cell membrane. It localises to the peroxisome membrane. The protein resides in the secreted. In terms of biological role, may mediate beneficial effects of muscular exercise. The protein is Fibronectin type III domain-containing protein 5b (fndc5b) of Danio rerio (Zebrafish).